A 189-amino-acid polypeptide reads, in one-letter code: MKGKGRNRAVKSLEIYVRKLAQANGIKPEMAAHIFHLIYEETPNGGISDDDLESLTGYKQSDIRRILRLLGDKRIIVSRKGRHPRKEATRYFWRIDSDTINVSLLTLKKKVLEKLVVKEAHDSGNSYYTCPRCGSKYSFDEAFTLDFTCPRCGEVLEEADSREGLERLRRTIDALREEIARDESRIYRS.

In terms of domain architecture, HTH TFE/IIEalpha-type spans 9–101; the sequence is AVKSLEIYVR…FWRIDSDTIN (93 aa).

It belongs to the TFE family. As to quaternary structure, monomer. Interaction with RNA polymerase subunits RpoF and RpoE is necessary for Tfe stimulatory transcription activity. Able to interact with Tbp and RNA polymerase in the absence of DNA promoter. Interacts both with the preinitiation and elongation complexes.

Functionally, transcription factor that plays a role in the activation of archaeal genes transcribed by RNA polymerase. Facilitates transcription initiation by enhancing TATA-box recognition by TATA-box-binding protein (Tbp), and transcription factor B (Tfb) and RNA polymerase recruitment. Not absolutely required for transcription in vitro, but particularly important in cases where Tbp or Tfb function is not optimal. It dynamically alters the nucleic acid-binding properties of RNA polymerases by stabilizing the initiation complex and destabilizing elongation complexes. Seems to translocate with the RNA polymerase following initiation and acts by binding to the non template strand of the transcription bubble in elongation complexes. The sequence is that of Transcription factor E from Aeropyrum pernix (strain ATCC 700893 / DSM 11879 / JCM 9820 / NBRC 100138 / K1).